The following is a 141-amino-acid chain: Large ribosomal subunit protein uL11 (141 aa).

Belongs to the universal ribosomal protein uL11 family. In terms of assembly, part of the ribosomal stalk of the 50S ribosomal subunit. Interacts with L10 and the large rRNA to form the base of the stalk. L10 forms an elongated spine to which L12 dimers bind in a sequential fashion forming a multimeric L10(L12)X complex. In terms of processing, one or more lysine residues are methylated.

In terms of biological role, forms part of the ribosomal stalk which helps the ribosome interact with GTP-bound translation factors. The polypeptide is Large ribosomal subunit protein uL11 (Aliarcobacter butzleri (strain RM4018) (Arcobacter butzleri)).